The chain runs to 101 residues: Immunity protein CdiI-2 (101 aa).

Specifically interacts with the truncated CT fragment of cognate toxin protein CdiA-2, which inhibits CdiA-2 tRNA nuclease activity.

Its function is as follows. Immunity protein component of a toxin-immunity protein module, which functions as a cellular contact-dependent growth inhibition (CDI) system. CDI modules allow bacteria to communicate with and inhibit the growth of closely related neighboring bacteria in a contact-dependent fashion. Neutralizes the toxic activity of cognate toxin CdiA (C-terminal 301 residue CT fragment) upon expression in E.coli. Does not inhibit toxic activity of CdiA from other strains of B.pseudomallei. Expression of this cdiAIB locus in B.thailandensis confers protection against other bacteria carrying the locus; growth inhibition requires cellular contact. In Burkholderia pseudomallei (strain 1026b), this protein is Immunity protein CdiI-2 (cdiI2).